Consider the following 182-residue polypeptide: Putative minor fimbrial subunit PmfF (182 aa).

The N-terminal stretch at 1 to 22 is a signal peptide; that stretch reads MKNSIIKSAITCLLLLSPSTFA.

This sequence belongs to the fimbrial protein family.

The protein resides in the fimbrium. The sequence is that of Putative minor fimbrial subunit PmfF (pmfF) from Proteus mirabilis (strain HI4320).